Consider the following 1086-residue polypeptide: NAD(P) transhydrogenase, mitochondrial (1086 aa).

The N-terminal 43 residues, 1 to 43 (MANLLKTVVTGCSCPFLSNLGSCKVLPGKKNFLRTFHTHRILW), are a transit peptide targeting the mitochondrion. Residues 44–474 (CSAPVKPGIP…TITPFRKTMT (431 aa)) lie on the Mitochondrial matrix side of the membrane. Residue K70 is modified to N6-acetyllysine. The residue at position 117 (K117) is an N6-succinyllysine. Residue 182 to 184 (RVT) coordinates NAD(+). Position 224 is an N6-succinyllysine (K224). Residues V237, 257 to 259 (DTR), and G287 each bind NAD(+). The residue at position 294 (K294) is an N6-succinyllysine. The NAD(+) site is built by E300 and L319. N6-succinyllysine is present on K331. K397 carries the post-translational modification N6-acetyllysine. Helical transmembrane passes span 475–493 (SASV…GIAA), 501–521 (MVTT…GVTP), 527–546 (LMSV…LVLM), and 558–578 (GLAA…FLVT). Residues 579–595 (QRMLDMFKRPTDPPEYN) lie on the Mitochondrial matrix side of the membrane. 5 consecutive transmembrane segments (helical) span residues 596–616 (YLYL…LYSG), 622–642 (IMYL…STQG), 646–666 (LGNA…LGGL), 672–691 (LLAQ…LTIA), and 702–722 (LVAA…IAEY). The Cytoplasmic segment spans residues 723-739 (IIEYPHFATDAAANLTK). A run of 5 helical transmembrane segments spans residues 740–760 (IVAY…LVAY), 778–797 (HLLN…PFMM), 801–819 (FTTG…AVMG), 833–853 (VVIT…GFLL), and 857–879 (LLTI…MCVA). Residues 880–1086 (MNRSLANVIL…QAKVRESYQK (207 aa)) lie on the Mitochondrial matrix side of the membrane. NADP(+) contacts are provided by residues Y933, 965-970 (VAGRMP), 1009-1011 (NDT), 1026-1027 (GM), 1042-1049 (KRSLGVGY), and 1068-1069 (DA). An N6-succinyllysine modification is found at K1079.

In the N-terminal section; belongs to the AlaDH/PNT family. It in the C-terminal section; belongs to the PNT beta subunit family. In terms of assembly, homodimer.

It is found in the mitochondrion inner membrane. It catalyses the reaction NAD(+) + NADPH + H(+)(in) = NADH + NADP(+) + H(+)(out). In terms of biological role, the transhydrogenation between NADH and NADP is coupled to respiration and ATP hydrolysis and functions as a proton pump across the membrane. May play a role in reactive oxygen species (ROS) detoxification in the adrenal gland. The chain is NAD(P) transhydrogenase, mitochondrial (NNT) from Bos taurus (Bovine).